A 289-amino-acid polypeptide reads, in one-letter code: Protoheme IX farnesyltransferase 2 (289 aa).

The next 9 membrane-spanning stretches (helical) occupy residues 1-21 (MIKP…FLLA), 28-48 (LTLM…GCGL), 76-96 (YSVL…LAIF), 100-120 (IALL…SLYM), 125-145 (VYGT…GYCA), 155-175 (VILL…IAIF), 199-219 (LHIV…PLAG), 221-241 (TGIA…GMAL), and 260-280 (CSIV…QLVV).

The protein belongs to the UbiA prenyltransferase family. Protoheme IX farnesyltransferase subfamily.

Its subcellular location is the cell inner membrane. It catalyses the reaction heme b + (2E,6E)-farnesyl diphosphate + H2O = Fe(II)-heme o + diphosphate. It functions in the pathway porphyrin-containing compound metabolism; heme O biosynthesis; heme O from protoheme: step 1/1. Functionally, converts heme B (protoheme IX) to heme O by substitution of the vinyl group on carbon 2 of heme B porphyrin ring with a hydroxyethyl farnesyl side group. The chain is Protoheme IX farnesyltransferase 2 from Shewanella woodyi (strain ATCC 51908 / MS32).